A 209-amino-acid chain; its full sequence is MSKNKLSASSGRWLKEHFDDKYVLEAQKRGYRSRAIFKLEEIQNKDKLLKPGMTVVDLGAAPGGWSQYAVEQVGDSGQVIACDILAMDSIAGVSFLQGDFREEAVLDALLERIQPDMVDVVMSDMAPNMSGNPSVDQPRSMYLVELALDMCRQVLAPNGSFTVKVFQGESFDAYLQEVRKVFKVVKIRKPDSSRARSREVYIVATGYKG.

Glycine 63, tryptophan 65, aspartate 83, aspartate 99, and aspartate 124 together coordinate S-adenosyl-L-methionine. Lysine 164 acts as the Proton acceptor in catalysis.

The protein belongs to the class I-like SAM-binding methyltransferase superfamily. RNA methyltransferase RlmE family.

The protein resides in the cytoplasm. The enzyme catalyses uridine(2552) in 23S rRNA + S-adenosyl-L-methionine = 2'-O-methyluridine(2552) in 23S rRNA + S-adenosyl-L-homocysteine + H(+). In terms of biological role, specifically methylates the uridine in position 2552 of 23S rRNA at the 2'-O position of the ribose in the fully assembled 50S ribosomal subunit. The protein is Ribosomal RNA large subunit methyltransferase E of Aliivibrio salmonicida (strain LFI1238) (Vibrio salmonicida (strain LFI1238)).